Consider the following 631-residue polypeptide: Phosphomethylpyrimidine synthase (631 aa).

Residues Asn-239, Met-268, Tyr-297, His-333, 353 to 355, 394 to 397, and Glu-433 each bind substrate; these read SRG and DGLR. His-437 provides a ligand contact to Zn(2+). Substrate is bound at residue Tyr-460. His-501 lines the Zn(2+) pocket. [4Fe-4S] cluster contacts are provided by Cys-581, Cys-584, and Cys-589.

It belongs to the ThiC family. As to quaternary structure, homodimer. It depends on [4Fe-4S] cluster as a cofactor.

It catalyses the reaction 5-amino-1-(5-phospho-beta-D-ribosyl)imidazole + S-adenosyl-L-methionine = 4-amino-2-methyl-5-(phosphooxymethyl)pyrimidine + CO + 5'-deoxyadenosine + formate + L-methionine + 3 H(+). It functions in the pathway cofactor biosynthesis; thiamine diphosphate biosynthesis. In terms of biological role, catalyzes the synthesis of the hydroxymethylpyrimidine phosphate (HMP-P) moiety of thiamine from aminoimidazole ribotide (AIR) in a radical S-adenosyl-L-methionine (SAM)-dependent reaction. The chain is Phosphomethylpyrimidine synthase from Escherichia coli O139:H28 (strain E24377A / ETEC).